A 346-amino-acid polypeptide reads, in one-letter code: Annexin A1 (346 aa).

An N-acetylalanine modification is found at alanine 2. Residue serine 5 is modified to Phosphoserine; by TRPM7. Glutamine 19 is covalently cross-linked (Isoglutamyl lysine isopeptide (Gln-Lys) (interchain with K-?)). Residue tyrosine 21 is modified to Phosphotyrosine; by EGFR. A disordered region spans residues valine 25–aspartate 47. 2 positions are modified to phosphoserine: serine 34 and serine 37. Residue threonine 41 is modified to Phosphothreonine. 4 Annexin repeats span residues phenylalanine 42 to lysine 113, threonine 114 to lysine 185, aspartate 197 to lysine 269, and serine 273 to glycine 344. At lysine 58 the chain carries N6-acetyllysine. Residues glycine 59, valine 60, glutamate 62, lysine 97, leucine 100, glutamate 105, methionine 127, glycine 129, glycine 131, threonine 132, and glutamate 134 each contribute to the Ca(2+) site. At threonine 136 the chain carries Phosphothreonine. Aspartate 171, glycine 210, and arginine 213 together coordinate Ca(2+). Lysine 214 is covalently cross-linked (Glycyl lysine isopeptide (Lys-Gly) (interchain with G-Cter in SUMO1); alternate). Lysine 214 is covalently cross-linked (Glycyl lysine isopeptide (Lys-Gly) (interchain with G-Cter in SUMO2); alternate). Glycine 215 contacts Ca(2+). An N6-acetyllysine modification is found at lysine 239. Positions 253, 255, and 256 each coordinate Ca(2+). Lysine 257 is covalently cross-linked (Glycyl lysine isopeptide (Lys-Gly) (interchain with G-Cter in SUMO1)). The Ca(2+) site is built by glutamate 261, methionine 286, glycine 288, and glycine 290. Lysine 312 carries the post-translational modification N6-acetyllysine. Cysteines 324 and 343 form a disulfide. The Ca(2+) site is built by leucine 328, glutamate 330, and threonine 331. Residue lysine 332 forms a Glycyl lysine isopeptide (Lys-Gly) (interchain with G-Cter in SUMO1) linkage. Residue glutamate 336 participates in Ca(2+) binding.

It belongs to the annexin family. Homodimer; non-covalently linked. Homodimer; linked by transglutamylation. Homodimers linked by transglutamylation are observed in placenta, but not in other tissues. Interacts with S100A11. Heterotetramer, formed by two molecules each of S100A11 and ANXA1. Interacts with DYSF. Interacts with EGFR. Phosphorylated by EGFR. Phosphorylated by protein kinase C and TRPM7. Phosphorylated in response to EGF treatment. In terms of processing, sumoylated. Post-translationally, proteolytically cleaved by cathepsin CTSG to release the active N-terminal peptide Ac2-26. As to expression, detected in lung and spleen (at protein level).

It localises to the nucleus. The protein resides in the cytoplasm. It is found in the cell projection. Its subcellular location is the cilium. The protein localises to the basolateral cell membrane. It localises to the lateral cell membrane. The protein resides in the early endosome. It is found in the cell membrane. Its subcellular location is the cytoplasmic vesicle membrane. The protein localises to the apical cell membrane. It localises to the membrane. The protein resides in the endosome. It is found in the secreted. Its subcellular location is the extracellular space. The protein localises to the extracellular exosome. It localises to the cytoplasmic vesicle. The protein resides in the secretory vesicle lumen. It is found in the phagocytic cup. Functionally, plays important roles in the innate immune response as effector of glucocorticoid-mediated responses and regulator of the inflammatory process. Has anti-inflammatory activity. Plays a role in glucocorticoid-mediated down-regulation of the early phase of the inflammatory response. Contributes to the adaptive immune response by enhancing signaling cascades that are triggered by T-cell activation, regulates differentiation and proliferation of activated T-cells. Promotes the differentiation of T-cells into Th1 cells and negatively regulates differentiation into Th2 cells. Has no effect on unstimulated T-cells. Negatively regulates hormone exocytosis via activation of the formyl peptide receptors and reorganization of the actin cytoskeleton. Has high affinity for Ca(2+) and can bind up to eight Ca(2+) ions. Displays Ca(2+)-dependent binding to phospholipid membranes. Plays a role in the formation of phagocytic cups and phagosomes. Plays a role in phagocytosis by mediating the Ca(2+)-dependent interaction between phagosomes and the actin cytoskeleton. Its function is as follows. Functions at least in part by activating the formyl peptide receptors and downstream signaling cascades. Promotes chemotaxis of granulocytes and monocytes via activation of the formyl peptide receptors. Promotes rearrangement of the actin cytoskeleton, cell polarization and cell migration. Promotes resolution of inflammation and wound healing. Acts via neutrophil N-formyl peptide receptors to enhance the release of CXCL2. This chain is Annexin A1 (ANXA1), found in Sus scrofa (Pig).